A 277-amino-acid polypeptide reads, in one-letter code: 2-dehydro-3-deoxyphosphooctonate aldolase (277 aa).

Belongs to the KdsA family.

It is found in the cytoplasm. It catalyses the reaction D-arabinose 5-phosphate + phosphoenolpyruvate + H2O = 3-deoxy-alpha-D-manno-2-octulosonate-8-phosphate + phosphate. It functions in the pathway carbohydrate biosynthesis; 3-deoxy-D-manno-octulosonate biosynthesis; 3-deoxy-D-manno-octulosonate from D-ribulose 5-phosphate: step 2/3. Its pathway is bacterial outer membrane biogenesis; lipopolysaccharide biosynthesis. The sequence is that of 2-dehydro-3-deoxyphosphooctonate aldolase from Brucella abortus (strain S19).